We begin with the raw amino-acid sequence, 327 residues long: DNA-directed RNA polymerase subunit alpha (327 aa).

Positions 1–233 are alpha N-terminal domain (alpha-NTD); the sequence is MVREKVKVST…NLFIPFLHVE (233 aa). Residues 267 to 327 are alpha C-terminal domain (alpha-CTD); it reads LAFQYIFIDQ…KKILDILEKK (61 aa).

The protein belongs to the RNA polymerase alpha chain family. In plastids the minimal PEP RNA polymerase catalytic core is composed of four subunits: alpha, beta, beta', and beta''. When a (nuclear-encoded) sigma factor is associated with the core the holoenzyme is formed, which can initiate transcription.

It is found in the plastid. The protein resides in the chloroplast. It catalyses the reaction RNA(n) + a ribonucleoside 5'-triphosphate = RNA(n+1) + diphosphate. Its function is as follows. DNA-dependent RNA polymerase catalyzes the transcription of DNA into RNA using the four ribonucleoside triphosphates as substrates. The chain is DNA-directed RNA polymerase subunit alpha from Crucihimalaya wallichii (Rock-cress).